A 525-amino-acid chain; its full sequence is GMP synthase [glutamine-hydrolyzing] (525 aa).

Residues 8–207 (KILILDFGSQ…ALDICECEAN (200 aa)) enclose the Glutamine amidotransferase type-1 domain. C85 functions as the Nucleophile in the catalytic mechanism. Residues H181 and E183 contribute to the active site. The GMPS ATP-PPase domain occupies 208–400 (WKPTSIIEDA…LGLPYDMLYR (193 aa)). Residue 235 to 241 (SGGVDSS) participates in ATP binding.

As to quaternary structure, homodimer.

It catalyses the reaction XMP + L-glutamine + ATP + H2O = GMP + L-glutamate + AMP + diphosphate + 2 H(+). It functions in the pathway purine metabolism; GMP biosynthesis; GMP from XMP (L-Gln route): step 1/1. Catalyzes the synthesis of GMP from XMP. The sequence is that of GMP synthase [glutamine-hydrolyzing] from Shewanella sediminis (strain HAW-EB3).